The chain runs to 228 residues: Ribulose-phosphate 3-epimerase, cytoplasmic isoform (228 aa).

Residue serine 12 coordinates substrate. Histidine 37, aspartate 39, and histidine 70 together coordinate a divalent metal cation. The active-site Proton acceptor is aspartate 39. Substrate is bound by residues histidine 70, 150 to 153, 179 to 181, and 201 to 202; these read GFGG, DGG, and GS. Residue aspartate 179 coordinates a divalent metal cation. The active-site Proton donor is the aspartate 179.

Belongs to the ribulose-phosphate 3-epimerase family. Homodimer. The cofactor is Co(2+). Fe(2+) is required as a cofactor. It depends on Mn(2+) as a cofactor. Zn(2+) serves as cofactor. Predominantly accumulates in roots and seedlings.

The protein localises to the cytoplasm. It catalyses the reaction D-ribulose 5-phosphate = D-xylulose 5-phosphate. It functions in the pathway carbohydrate degradation; pentose phosphate pathway; D-xylulose 5-phosphate from D-ribulose 5-phosphate (non-oxidative stage): step 1/1. Catalyzes the reversible epimerization of D-ribulose 5-phosphate to D-xylulose 5-phosphate. This is Ribulose-phosphate 3-epimerase, cytoplasmic isoform from Oryza sativa subsp. japonica (Rice).